Reading from the N-terminus, the 459-residue chain is MSNRFAVILAAGKGTRMKSKLYKVLHPVCGKPMVQHVVDQVSQLGLQKLVTVVGHGAEMVQEQLGNVSEFALQAEQLGTAHAVDQAAGVLANEEGTTLVICGDTPLITAETMEALLQQHKEAGAMATVLTAYIEEPAGYGRIVRNENGHVEKIVEHKDANEKELAIKEINTGTYCFDNKALFASLSKVSNDNVQGEYYLPDVIEILKNEGHIVSAYQTEHFDETLGVNDRVALSQAEIIMKNRINRKNMVNGVTIIDPSNTYISADAIIGSDTVLHPGTIIEGNTVIGSDCEIGPHTVIRDSEIGDRTTIRQSTVHDSKLGTEVSVGPFAHIRPDSVIGDEVRVGNFVEIKKTVFGNRSKASHLSYIGDAQVGEDVNLGCGSITVNYDGKNKFKTVIGNGVFIGCNSNLVAPVTVEDGAYVAAGSTITENVPSKALSVARARQVNKEDYVDQLLNKKKS.

The pyrophosphorylase stretch occupies residues 1–230; it reads MSNRFAVILA…FDETLGVNDR (230 aa). UDP-N-acetyl-alpha-D-glucosamine contacts are provided by residues 9–12, Lys23, Gln73, and 78–79; these read LAAG and GT. Asp103 is a binding site for Mg(2+). UDP-N-acetyl-alpha-D-glucosamine contacts are provided by Gly140, Glu155, Asn170, and Asn228. Asn228 contacts Mg(2+). Positions 231–251 are linker; sequence VALSQAEIIMKNRINRKNMVN. The interval 252–459 is N-acetyltransferase; it reads GVTIIDPSNT…VDQLLNKKKS (208 aa). Positions 333 and 351 each coordinate UDP-N-acetyl-alpha-D-glucosamine. Residue His363 is the Proton acceptor of the active site. Residues Tyr366 and Asn377 each coordinate UDP-N-acetyl-alpha-D-glucosamine. Acetyl-CoA is bound by residues 386 to 387, Ala423, and Arg440; that span reads NY.

It in the N-terminal section; belongs to the N-acetylglucosamine-1-phosphate uridyltransferase family. The protein in the C-terminal section; belongs to the transferase hexapeptide repeat family. As to quaternary structure, homotrimer. Mg(2+) serves as cofactor.

The protein localises to the cytoplasm. The enzyme catalyses alpha-D-glucosamine 1-phosphate + acetyl-CoA = N-acetyl-alpha-D-glucosamine 1-phosphate + CoA + H(+). The catalysed reaction is N-acetyl-alpha-D-glucosamine 1-phosphate + UTP + H(+) = UDP-N-acetyl-alpha-D-glucosamine + diphosphate. It participates in nucleotide-sugar biosynthesis; UDP-N-acetyl-alpha-D-glucosamine biosynthesis; N-acetyl-alpha-D-glucosamine 1-phosphate from alpha-D-glucosamine 6-phosphate (route II): step 2/2. Its pathway is nucleotide-sugar biosynthesis; UDP-N-acetyl-alpha-D-glucosamine biosynthesis; UDP-N-acetyl-alpha-D-glucosamine from N-acetyl-alpha-D-glucosamine 1-phosphate: step 1/1. The protein operates within bacterial outer membrane biogenesis; LPS lipid A biosynthesis. Catalyzes the last two sequential reactions in the de novo biosynthetic pathway for UDP-N-acetylglucosamine (UDP-GlcNAc). The C-terminal domain catalyzes the transfer of acetyl group from acetyl coenzyme A to glucosamine-1-phosphate (GlcN-1-P) to produce N-acetylglucosamine-1-phosphate (GlcNAc-1-P), which is converted into UDP-GlcNAc by the transfer of uridine 5-monophosphate (from uridine 5-triphosphate), a reaction catalyzed by the N-terminal domain. The sequence is that of Bifunctional protein GlmU from Bacillus anthracis (strain A0248).